Here is a 1106-residue protein sequence, read N- to C-terminus: MDGKRRPGPGPGVPPKRARGGLWDEDEAYRPSQFEEELALMEEMEAERRLQEQEEEELQSALEAADGQFSPTAIDARWLRPAPPALDPQMEPLIFQQLEIDHYVAPARPLPGAPPPSQDSVPILRAFGVTNEGVSVCCHIHGFAPYFYTPAPPGFGPEHLSELQRELSAAISRDQRGGKELTGPAVLAVELCSRESMFGYHGHGPSPFLRITLALPRLMAPARRLLEQGIRLAGLGTPSFAPYEANVDFEIRFMVDTDIVGCNWLELPAGKYILRPEGKATLCQLEADVLWSDVISHPPEGEWQRIAPLRVLSFDIECAGRKGIFPEPERDPVIQICSLGLRWGEPEPFLRLALTLRPCAPILGAKVQSYEREEDLLQAWSTFIRIMDPDVITGYNIQNFDLPYLISRAQTLKVPGFPLLGRVIGLRSNIRESSFQSRQTGRRDSKVVSMVGRVQMDMLQVLLREYKLRSYTLNAVSFHFLGEQKEDVQHSIITDLQNGNDQTRRRLAVYCLKDAFLPLRLLERLMVLVNAMEMARVTGVPLGYLLSRGQQVKVVSQLLRQAMRQGLLMPVVKTEGGEDYTGATVIEPLKGYYDVPIATLDFSSLYPSIMMAHNLCYTTLLRPGAAQKLGLTEDQFIKTPTGDEFVKASVRKGLLPQILENLLSARKRAKAELAKETDPLRRQVLDGRQLALKVSANSVYGFTGAQVGRLPCLEISQSVTGFGRQMIEKTKQLVETKYTVENGYSTSAKVVYGDTDSVMCRFGVSSVAEAMALGREAADWVSGHFPSPIRLEFEKVYFPYLLISKKRYAGLLFSSRPDAHDRMDCKGLEAVRRDNCPLVANLVTASLRRLLIDRDPSGAVAHAQDVISDLLCNRIDISQLVITKELTRAAADYAGKQAHVELAERMRKRDPGSAPSLGDRVPYVIISAAKGVAAYMKSEDPLFVLEHSLPIDTQYYLEQQLAKPLLRIFEPILGEGRAEAVLLRGDHTRCKTVLTGKVGGLLAFAKRRNCCIGCRTVLSHQGAVCKFCQPRESELYQKEVSHLSALEERFSRLWTQCQRCQGSLHEDVICTSRDCPIFYMRKKVRKDLEDQERLLRRFGPPGPEAW.

The disordered stretch occupies residues 1-28 (MDGKRRPGPGPGVPPKRARGGLWDEDEA). Positions 4 to 19 (KRRPGPGPGVPPKRAR) match the Nuclear localization signal motif. Position 19 is an omega-N-methylarginine (Arg19). Residue Lys573 forms a Glycyl lysine isopeptide (Lys-Gly) (interchain with G-Cter in SUMO2) linkage. The Zn(2+) site is built by Cys1011, Cys1014, Cys1025, and Cys1028. A CysA-type zinc finger spans residues 1011 to 1028 (CIGCRTVLSHQGAVCKFC). The [4Fe-4S] cluster site is built by Cys1057, Cys1060, Cys1070, and Cys1075. The CysB motif motif lies at 1057–1075 (CQRCQGSLHEDVICTSRDC).

The protein belongs to the DNA polymerase type-B family. Component of the tetrameric DNA polymerase delta complex (Pol-delta4), which consists of POLD1/p125, POLD2/p50, POLD3/p66/p68 and POLD4/p12, with POLD1 bearing both DNA polymerase and 3' to 5' proofreading exonuclease activities. Within Pol-delta4, directly interacts with POLD2 and POLD4. Following genotoxic stress by DNA-damaging agents, such as ultraviolet light and methyl methanesulfonate, or by replication stress induced by treatment with hydroxyurea or aphidicolin, Pol-delta4 is converted into a trimeric form of the complex (Pol-delta3) by POLD4 degradation. Pol-delta3 is the major form at S phase replication sites and DNA damage sites. POLD1 displays different catalytic properties depending upon the complex it is found in. It exhibits higher proofreading activity and fidelity than Pol-delta4, making it particularly well suited to respond to DNA damage. Directly interacts with PCNA, as do POLD3 and POLD4; this interaction stimulates Pol-delta4 polymerase activity. As POLD2 and POLD4, directly interacts with WRNIP1; this interaction stimulates DNA polymerase delta-mediated DNA synthesis, independently of the presence of PCNA. This stimulation may be due predominantly to an increase of initiation frequency and also to increased processivity. Also observed as a dimeric complex with POLD2 (Pol-delta2). Pol-delta2 is relatively insensitive to the PCNA stimulation (2-5-fold) compared to Pol-delta4 that is stimulated by over 50-fold. Interacts with POLDIP2; this interaction is indirect and most probably mediated through POLD2-binding. Interacts with CIAO1. Interacts with POLDIP2. Interacts with RFC1. Requires [4Fe-4S] cluster as cofactor.

It is found in the nucleus. It catalyses the reaction DNA(n) + a 2'-deoxyribonucleoside 5'-triphosphate = DNA(n+1) + diphosphate. Its activity is regulated as follows. Regulated by alteration of quaternary structure. Exhibits burst rates of DNA synthesis are about 5 times faster in the presence of POLD4 (Pol-delta4 complex) than in its absence (Pol-delta3 complex), while the affinity of the enzyme for its DNA and dNTP substrates appears unchanged. The Pol-delta3 complex is more likely to proofread DNA synthesis because it cleaves single-stranded DNA twice as fast and transfers mismatched DNA from the polymerase to the exonuclease sites 9 times faster compared to the Pol-delta3 complex. Pol-delta3 also extends mismatched primers 3 times more slowly in the absence of POLD4. The conversion of Pol-delta4 into Pol-delta3 is induced by genotoxic stress or by replication stress leading POLD4 degradation. Stimulated in the presence of PCNA. This stimulation is further increased in the presence of KCTD13/PDIP1, most probably via direct interaction between KCTD13 and POLD2. As the catalytic component of the trimeric (Pol-delta3 complex) and tetrameric DNA polymerase delta complexes (Pol-delta4 complex), plays a crucial role in high fidelity genome replication, including in lagging strand synthesis, and repair. Exhibits both DNA polymerase and 3'- to 5'-exonuclease activities. Requires the presence of accessory proteins POLD2, POLD3 and POLD4 for full activity. Depending upon the absence (Pol-delta3) or the presence of POLD4 (Pol-delta4), displays differences in catalytic activity. Most notably, expresses higher proofreading activity in the context of Pol-delta3 compared with that of Pol-delta4. Although both Pol-delta3 and Pol-delta4 process Okazaki fragments in vitro, Pol-delta3 may be better suited to fulfill this task, exhibiting near-absence of strand displacement activity compared to Pol-delta4 and stalling on encounter with the 5'-blocking oligonucleotides. Pol-delta3 idling process may avoid the formation of a gap, while maintaining a nick that can be readily ligated. Along with DNA polymerase kappa, DNA polymerase delta carries out approximately half of nucleotide excision repair (NER) synthesis following UV irradiation. Under conditions of DNA replication stress, in the presence of POLD3 and POLD4, may catalyze the repair of broken replication forks through break-induced replication (BIR). Involved in the translesion synthesis (TLS) of templates carrying O6-methylguanine, 8oxoG or abasic sites. This Bos taurus (Bovine) protein is DNA polymerase delta catalytic subunit (POLD1).